Consider the following 482-residue polypeptide: tRNA sulfurtransferase (482 aa).

Residues 61-165 (NQVLTAVTHT…NEKLNLVIAR (105 aa)) form the THUMP domain. Residues 183-184 (LI), K265, G287, and Q296 contribute to the ATP site. C344 and C456 are oxidised to a cystine. Positions 404–482 (LGSDVVVLDI…GYKNVKVYRP (79 aa)) constitute a Rhodanese domain. Catalysis depends on C456, which acts as the Cysteine persulfide intermediate.

It belongs to the ThiI family.

It is found in the cytoplasm. It carries out the reaction [ThiI sulfur-carrier protein]-S-sulfanyl-L-cysteine + a uridine in tRNA + 2 reduced [2Fe-2S]-[ferredoxin] + ATP + H(+) = [ThiI sulfur-carrier protein]-L-cysteine + a 4-thiouridine in tRNA + 2 oxidized [2Fe-2S]-[ferredoxin] + AMP + diphosphate. The catalysed reaction is [ThiS sulfur-carrier protein]-C-terminal Gly-Gly-AMP + S-sulfanyl-L-cysteinyl-[cysteine desulfurase] + AH2 = [ThiS sulfur-carrier protein]-C-terminal-Gly-aminoethanethioate + L-cysteinyl-[cysteine desulfurase] + A + AMP + 2 H(+). The protein operates within cofactor biosynthesis; thiamine diphosphate biosynthesis. In terms of biological role, catalyzes the ATP-dependent transfer of a sulfur to tRNA to produce 4-thiouridine in position 8 of tRNAs, which functions as a near-UV photosensor. Also catalyzes the transfer of sulfur to the sulfur carrier protein ThiS, forming ThiS-thiocarboxylate. This is a step in the synthesis of thiazole, in the thiamine biosynthesis pathway. The sulfur is donated as persulfide by IscS. This Aliivibrio salmonicida (strain LFI1238) (Vibrio salmonicida (strain LFI1238)) protein is tRNA sulfurtransferase.